The primary structure comprises 298 residues: Mitochondrial substrate carrier family protein N (298 aa).

The Mitochondrial intermembrane segment spans residues 1–13 (MAGDLTPSLFLKY). Solcar repeat units lie at residues 8–92 (SLFL…FKKT), 104–188 (FRIP…TAEN), and 207–290 (QKLS…IKQM). A helical transmembrane segment spans residues 14 to 34 (GFGGALSCSITHSLVVPLDVV). The Mitochondrial matrix portion of the chain corresponds to 35-60 (KTLLQTNPGKYTGMMNGFSTVIKEQG). Residues 61–81 (PSGLLQGLGPTAVGYALQGFL) form a helical membrane-spanning segment. Residues 82 to 105 (KFGFYEVFKKTYADAVGEKADQFR) are Mitochondrial intermembrane-facing. A helical transmembrane segment spans residues 106–126 (IPIWLAASATAEVIADIALCP). Residues 127-162 (NEAVRIRLVAEPTFAKSPVEAFGKIFKQEGVLGFYK) are Mitochondrial matrix-facing. A helical membrane pass occupies residues 163-179 (GLPPILLKQVPYTMAKF). The Mitochondrial intermembrane portion of the chain corresponds to 180 to 208 (AVFEFTAENVYKGLAASGKPKESLTDGQK). The helical transmembrane segment at 209–229 (LSVSLGSGIVAGIVAAIVSQP) threads the bilayer. At 230-262 (ADTILSKINQEKTDGGVVKAIGNIMRRLGVRGL) the chain is on the mitochondrial matrix side. A helical membrane pass occupies residues 263-283 (FLGLPTRCFMVGTLTAGQFFI). Residues 284–298 (YDGIKQMLGLTPAKK) are Mitochondrial intermembrane-facing.

It belongs to the mitochondrial carrier (TC 2.A.29) family.

It is found in the mitochondrion inner membrane. In terms of biological role, mitochondrial solute carriers shuttle metabolites, nucleotides, and cofactors through the mitochondrial inner membrane. Transports phosphate groups from the cytosol to the mitochondrial matrix. Phosphate is cotransported with H(+). The chain is Mitochondrial substrate carrier family protein N (mcfN) from Dictyostelium discoideum (Social amoeba).